Here is a 356-residue protein sequence, read N- to C-terminus: Alanine racemase, catabolic (356 aa).

K35 (proton acceptor; specific for D-alanine) is an active-site residue. K35 bears the N6-(pyridoxal phosphate)lysine mark. Residue R130 participates in substrate binding. The active-site Proton acceptor; specific for L-alanine is Y253. Substrate is bound at residue M301.

This sequence belongs to the alanine racemase family. It depends on pyridoxal 5'-phosphate as a cofactor.

The catalysed reaction is L-alanine = D-alanine. In terms of biological role, isomerizes L-alanine to D-alanine which is then oxidized to pyruvate by DadA. The sequence is that of Alanine racemase, catabolic (dadX) from Escherichia coli O6:H1 (strain CFT073 / ATCC 700928 / UPEC).